Reading from the N-terminus, the 314-residue chain is Methionyl-tRNA formyltransferase (314 aa).

110 to 113 (SLLP) lines the (6S)-5,6,7,8-tetrahydrofolate pocket.

This sequence belongs to the Fmt family.

It carries out the reaction L-methionyl-tRNA(fMet) + (6R)-10-formyltetrahydrofolate = N-formyl-L-methionyl-tRNA(fMet) + (6S)-5,6,7,8-tetrahydrofolate + H(+). Attaches a formyl group to the free amino group of methionyl-tRNA(fMet). The formyl group appears to play a dual role in the initiator identity of N-formylmethionyl-tRNA by promoting its recognition by IF2 and preventing the misappropriation of this tRNA by the elongation apparatus. This Bacillus cereus (strain G9842) protein is Methionyl-tRNA formyltransferase.